The following is a 293-amino-acid chain: 4-hydroxy-tetrahydrodipicolinate synthase (293 aa).

Thr46 serves as a coordination point for pyruvate. Residue Tyr134 is the Proton donor/acceptor of the active site. Lys162 (schiff-base intermediate with substrate) is an active-site residue. Position 204 (Ile204) interacts with pyruvate.

Belongs to the DapA family. In terms of assembly, homotetramer; dimer of dimers.

The protein localises to the cytoplasm. The enzyme catalyses L-aspartate 4-semialdehyde + pyruvate = (2S,4S)-4-hydroxy-2,3,4,5-tetrahydrodipicolinate + H2O + H(+). It participates in amino-acid biosynthesis; L-lysine biosynthesis via DAP pathway; (S)-tetrahydrodipicolinate from L-aspartate: step 3/4. Its function is as follows. Catalyzes the condensation of (S)-aspartate-beta-semialdehyde [(S)-ASA] and pyruvate to 4-hydroxy-tetrahydrodipicolinate (HTPA). This chain is 4-hydroxy-tetrahydrodipicolinate synthase, found in Bdellovibrio bacteriovorus (strain ATCC 15356 / DSM 50701 / NCIMB 9529 / HD100).